Here is a 371-residue protein sequence, read N- to C-terminus: Histidinol-phosphate aminotransferase (371 aa).

The residue at position 228 (Lys228) is an N6-(pyridoxal phosphate)lysine.

This sequence belongs to the class-II pyridoxal-phosphate-dependent aminotransferase family. Histidinol-phosphate aminotransferase subfamily. It depends on pyridoxal 5'-phosphate as a cofactor.

It catalyses the reaction L-histidinol phosphate + 2-oxoglutarate = 3-(imidazol-4-yl)-2-oxopropyl phosphate + L-glutamate. It functions in the pathway amino-acid biosynthesis; L-histidine biosynthesis; L-histidine from 5-phospho-alpha-D-ribose 1-diphosphate: step 7/9. The protein is Histidinol-phosphate aminotransferase of Methanococcus aeolicus (strain ATCC BAA-1280 / DSM 17508 / OCM 812 / Nankai-3).